Reading from the N-terminus, the 242-residue chain is Immunity protein TsiV2 (242 aa).

A run of 3 helical transmembrane segments spans residues valine 39–isoleucine 59, phenylalanine 66–proline 86, and phenylalanine 118–phenylalanine 138.

Its subcellular location is the host membrane. Functionally, immunity protein that plays a role in preventing early activation of toxin VasX. The polypeptide is Immunity protein TsiV2 (Vibrio cholerae serotype O1 (strain ATCC 39315 / El Tor Inaba N16961)).